Here is a 449-residue protein sequence, read N- to C-terminus: MAEGGQAQQQPPQLGPGAAARGMKRESEVELPVPGAGADGPEPGLSKRPRTEEAADGGMQNEPLTPGYHGFPARDGQGNQEPTTTPDAMVQPFTTIPFPPPPQNGIPTEYGVPHTQDYAGQTSEHNLTLYGSTQPHGEQSSNSPSNQNGSLTQTEGGAQTDGQQSQTQSSENSESKSTPKRLHVSNIPFRFRDPDLRQMFGQFGKILDVEIIFNERGSKGFGFVTFENSADADRAREKLHGTVVEGRKIEVNNATARVMTNKKMVTPYANGWKLSPVVGAVYGPELYAASSFQADVSLGNEAAVPLSGRGGINTYIPLISLPLVPGFPYPTAATTAAAFRGAHLRGRGRTVYGAVRAVPPTAIPAYPGVVYQDGFYGADLYGGYAAYRYAQPATATAATAAAAAAAAYSDGYGRVYTADPYHALAPAASYGVGAVASLYRGGYSRFAPY.

Residues 1–21 (MAEGGQAQQQPPQLGPGAAAR) are compositionally biased toward low complexity. The segment at 1-186 (MAEGGQAQQQ…STPKRLHVSN (186 aa)) is disordered. Composition is skewed to polar residues over residues 77-86 (QGNQEPTTTP) and 118-138 (YAGQTSEHNLTLYGSTQPHGE). Low complexity predominate over residues 139–176 (QSSNSPSNQNGSLTQTEGGAQTDGQQSQTQSSENSESK). One can recognise an RRM domain in the interval 180–256 (KRLHVSNIPF…RKIEVNNATA (77 aa)). Omega-N-methylarginine is present on residues Arg-236, Gly-241, Tyr-268, and Lys-273. Glu-285 and Pro-317 each carry asymmetric dimethylarginine. Leu-318, Leu-323, Ala-336, Arg-340, and Gly-341 each carry omega-N-methylarginine. An asymmetric dimethylarginine mark is found at Arg-356 and Arg-388. Residues Arg-440 and Arg-445 each carry the asymmetric dimethylarginine; alternate modification. Omega-N-methylarginine; alternate occurs at positions 440 and 445.

As to quaternary structure, interacts with ER-alpha N-terminal activation domain. Interacts with RBPMS; the interaction allows cooperative assembly of stable cell-specific alternative splicing regulatory complexes. Detected in brain neurons (at protein level). Detected in heart, brain, embryo, lung, liver, kidney and ovary.

The protein localises to the nucleus. It is found in the cytoplasm. Its function is as follows. RNA-binding protein that regulates alternative splicing events by binding to 5'-UGCAUGU-3' elements. Prevents binding of U2AF2 to the 3'-splice site. Regulates alternative splicing of tissue-specific exons and of differentially spliced exons during erythropoiesis. Seems to act as a coregulatory factor of ER-alpha. Together with RNA binding proteins RBPMS and MBNL1/2, activates vascular smooth muscle cells alternative splicing events. In Mus musculus (Mouse), this protein is RNA binding protein fox-1 homolog 2 (Rbfox2).